Reading from the N-terminus, the 44-residue chain is DKLIGSCVWGAVNYTSDCNGECKRRGYKGGHCGSFANVNCWCET.

3 disulfides stabilise this stretch: C7-C32, C18-C40, and C22-C42.

Its subcellular location is the secreted. In terms of biological role, this peptide has potent anti-fungal activity. Has no activity against Gram-negative and Gram-positive bacteria. This chain is Defensin heliomicin, found in Heliothis virescens (Tobacco budworm moth).